The primary structure comprises 362 residues: Phosphoserine aminotransferase (362 aa).

Arginine 43 serves as a coordination point for L-glutamate. Residues 77 to 78, tryptophan 103, threonine 153, aspartate 173, and glutamine 196 contribute to the pyridoxal 5'-phosphate site; that span reads AT. The residue at position 197 (lysine 197) is an N6-(pyridoxal phosphate)lysine. 238–239 provides a ligand contact to pyridoxal 5'-phosphate; it reads NT.

It belongs to the class-V pyridoxal-phosphate-dependent aminotransferase family. SerC subfamily. As to quaternary structure, homodimer. Requires pyridoxal 5'-phosphate as cofactor.

The protein resides in the cytoplasm. The enzyme catalyses O-phospho-L-serine + 2-oxoglutarate = 3-phosphooxypyruvate + L-glutamate. It carries out the reaction 4-(phosphooxy)-L-threonine + 2-oxoglutarate = (R)-3-hydroxy-2-oxo-4-phosphooxybutanoate + L-glutamate. It participates in amino-acid biosynthesis; L-serine biosynthesis; L-serine from 3-phospho-D-glycerate: step 2/3. It functions in the pathway cofactor biosynthesis; pyridoxine 5'-phosphate biosynthesis; pyridoxine 5'-phosphate from D-erythrose 4-phosphate: step 3/5. Its function is as follows. Catalyzes the reversible conversion of 3-phosphohydroxypyruvate to phosphoserine and of 3-hydroxy-2-oxo-4-phosphonooxybutanoate to phosphohydroxythreonine. The protein is Phosphoserine aminotransferase of Xylella fastidiosa (strain 9a5c).